Consider the following 413-residue polypeptide: MQKRVVILLLDSFGIGASEDAKDFGDLGANTLGNIAKACFNNLADSNDRSGALKLPYLESLGLGLSALKAANELPLGFQSQPNLIGAYAYAQELSSAKDTISGHWEMMGAPVLFEWGYFKDKTHSFPKEILDEIVRKTKIKGYLGNCHASGTEIIKDLGEKHLETLYPIFYTSADSVFQIAAHEERFGLDNLYALCEEAFQILEPLKIARVIARPFIGTNRESFKRTANRKDYAIKPHKKLLFETFIEEKRGEVISIGKIADIYAHVGITQKFKAGSLMELCDVTLEQVKNAKNNSLIFTNFVHFDSDYGHRRDISGYANALEYFDARLKEVLENLRENDLLILCADHGCDPSFKGTDHTREYIPVLFYHKDLQPAFLGKSESFADIGQSIAHFLGLSPLDYGKNLLNFKGQP.

Asp-11, Asp-306, His-311, Asp-347, His-348, and His-359 together coordinate Mn(2+).

This sequence belongs to the phosphopentomutase family. Mn(2+) serves as cofactor.

It is found in the cytoplasm. The catalysed reaction is 2-deoxy-alpha-D-ribose 1-phosphate = 2-deoxy-D-ribose 5-phosphate. It catalyses the reaction alpha-D-ribose 1-phosphate = D-ribose 5-phosphate. It functions in the pathway carbohydrate degradation; 2-deoxy-D-ribose 1-phosphate degradation; D-glyceraldehyde 3-phosphate and acetaldehyde from 2-deoxy-alpha-D-ribose 1-phosphate: step 1/2. Functionally, isomerase that catalyzes the conversion of deoxy-ribose 1-phosphate (dRib-1-P) and ribose 1-phosphate (Rib-1-P) to deoxy-ribose 5-phosphate (dRib-5-P) and ribose 5-phosphate (Rib-5-P), respectively. This is Phosphopentomutase from Helicobacter pylori (strain ATCC 700392 / 26695) (Campylobacter pylori).